Reading from the N-terminus, the 232-residue chain is 2,3,4,5-tetrahydropyridine-2,6-dicarboxylate N-acetyltransferase (232 aa).

Belongs to the transferase hexapeptide repeat family. DapH subfamily.

The enzyme catalyses (S)-2,3,4,5-tetrahydrodipicolinate + acetyl-CoA + H2O = L-2-acetamido-6-oxoheptanedioate + CoA. It participates in amino-acid biosynthesis; L-lysine biosynthesis via DAP pathway; LL-2,6-diaminopimelate from (S)-tetrahydrodipicolinate (acetylase route): step 1/3. Its function is as follows. Catalyzes the transfer of an acetyl group from acetyl-CoA to tetrahydrodipicolinate. The polypeptide is 2,3,4,5-tetrahydropyridine-2,6-dicarboxylate N-acetyltransferase (Streptococcus suis (strain 98HAH33)).